The following is a 268-amino-acid chain: MSAVIEARHLSKRAGRAKLLDGVGLTVAAGEMVAIIGPNGAGKSTLLRLLSGDLRPSQGEVWLKQRDIGSYTPRELAARRAMLSQHINVTFPFTVEEIVLMGAGDRSAREAGRLVDAALDEVGLAHFRERQLPTLSGGEQQRAHFARVLVQLACGEAEHGPGLLLLDEPTSSLDLRHQIDLVEAARRRAGTGTAVIAILHDLNLAIRFADRLVVLSGGKLAADGPRTEVVTRETIRDIFEIDAVVHQADGVPYVLPQSMRAAASAARI.

Residues 5–242 (IEARHLSKRA…ETIRDIFEID (238 aa)) enclose the ABC transporter domain. An ATP-binding site is contributed by 37–44 (GPNGAGKS).

The protein belongs to the ABC transporter superfamily. Heme (hemin) importer (TC 3.A.1.14.5) family. In terms of assembly, the complex is composed of two ATP-binding proteins (HmuV), two transmembrane proteins (HmuU) and a solute-binding protein (HmuT).

Its subcellular location is the cell inner membrane. Its function is as follows. Part of the ABC transporter complex HmuTUV involved in hemin import. Responsible for energy coupling to the transport system. The protein is Hemin import ATP-binding protein HmuV of Bradyrhizobium diazoefficiens (strain JCM 10833 / BCRC 13528 / IAM 13628 / NBRC 14792 / USDA 110).